Consider the following 241-residue polypeptide: 1-(5-phosphoribosyl)-5-[(5-phosphoribosylamino)methylideneamino] imidazole-4-carboxamide isomerase (241 aa).

Residue Asp8 is the Proton acceptor of the active site. Asp130 functions as the Proton donor in the catalytic mechanism.

The protein belongs to the HisA/HisF family.

It localises to the cytoplasm. It catalyses the reaction 1-(5-phospho-beta-D-ribosyl)-5-[(5-phospho-beta-D-ribosylamino)methylideneamino]imidazole-4-carboxamide = 5-[(5-phospho-1-deoxy-D-ribulos-1-ylimino)methylamino]-1-(5-phospho-beta-D-ribosyl)imidazole-4-carboxamide. The protein operates within amino-acid biosynthesis; L-histidine biosynthesis; L-histidine from 5-phospho-alpha-D-ribose 1-diphosphate: step 4/9. This chain is 1-(5-phosphoribosyl)-5-[(5-phosphoribosylamino)methylideneamino] imidazole-4-carboxamide isomerase, found in Francisella philomiragia subsp. philomiragia (strain ATCC 25017 / CCUG 19701 / FSC 153 / O#319-036).